A 149-amino-acid polypeptide reads, in one-letter code: uncharacterized protein (149 aa).

Residues 124–144 (IIIIALIIILANYAPSIIGKI) form a helical membrane-spanning segment.

Belongs to the M.jannaschii MJ0023/MJ0349/MJ1072/MJ1074/MJ1107/MJECL16 family.

The protein resides in the membrane. This is an uncharacterized protein from Methanocaldococcus jannaschii (strain ATCC 43067 / DSM 2661 / JAL-1 / JCM 10045 / NBRC 100440) (Methanococcus jannaschii).